Consider the following 121-residue polypeptide: Small ribosomal subunit protein uS13 (121 aa).

The tract at residues 97 to 121 (VRGQRTRTNARTRRGARKTVAGKKK) is disordered. Basic residues predominate over residues 100-121 (QRTRTNARTRRGARKTVAGKKK).

It belongs to the universal ribosomal protein uS13 family. As to quaternary structure, part of the 30S ribosomal subunit. Forms a loose heterodimer with protein S19. Forms two bridges to the 50S subunit in the 70S ribosome.

Located at the top of the head of the 30S subunit, it contacts several helices of the 16S rRNA. In the 70S ribosome it contacts the 23S rRNA (bridge B1a) and protein L5 of the 50S subunit (bridge B1b), connecting the 2 subunits; these bridges are implicated in subunit movement. Contacts the tRNAs in the A and P-sites. In Synechococcus sp. (strain CC9605), this protein is Small ribosomal subunit protein uS13.